A 670-amino-acid polypeptide reads, in one-letter code: Solute carrier organic anion transporter family member 1A2 (670 aa).

The Cytoplasmic portion of the chain corresponds to 1–20 (MGETEKRIETHRIRCLSKLK). The chain crosses the membrane as a helical span at residues 21–40 (MFLLAITCAFVSKTLSGSYM). The Extracellular portion of the chain corresponds to 41-59 (NSMLTQIERQFNIPTSLVG). A helical membrane pass occupies residues 60-80 (FINGSFEIGNLLLIIFVSYFG). The Cytoplasmic segment spans residues 81 to 86 (TKLHRP). A helical membrane pass occupies residues 87-111 (IMIGIGCVVMGLGCFLKSLPHFLMN). The Extracellular segment spans residues 112–155 (QYEYESTVSVSGNLSSNSFLCMENGTQILRPTQDPSECTKEVKS). N-linked (GlcNAc...) asparagine glycosylation is found at asparagine 124 and asparagine 135. The chain crosses the membrane as a helical span at residues 156-184 (LMWVYVLVGNIVRGMGETPILPLGISYIE). Over 185–203 (DFAKFENSPLYIGLVETGA) the chain is Cytoplasmic. Residues 204 to 224 (IIGPLIGLLLASFCANVYVDT) traverse the membrane as a helical segment. The Extracellular portion of the chain corresponds to 225–242 (GFVNTDDLIITPTDTRWV). A helical transmembrane segment spans residues 243-267 (GAWWFGFLICAGVNVLTAIPFFFLP). Residues 268–311 (NTLPKEGLETNADIIKNENEDKQKEEVKKEKYGITKDFLPFMKS) are Cytoplasmic-facing. The helical transmembrane segment at 312 to 333 (LSCNPIYMLFILVSVIQFNAFV) threads the bilayer. The Extracellular segment spans residues 334-353 (NMISFMPKYLEQQYGISSSD). The chain crosses the membrane as a helical span at residues 354-377 (AIFLMGIYNLPPICIGYIIGGLIM). The Cytoplasmic portion of the chain corresponds to 378 to 381 (KKFK). A helical transmembrane segment spans residues 382–405 (ITVKQAAHIGCWLSLLEYLLYFLS). Topologically, residues 406 to 513 (FLMTCENSSV…PDCSLMLQYF (108 aa)) are extracellular. Residues asparagine 412 and asparagine 419 are each glycosylated (N-linked (GlcNAc...) asparagine). The 56-residue stretch at 433-488 (NDIFADCNVDCNCPSKIWDPVCGNNGLSYLSACLAGCETSIGTGINMVFQNCSCIQ) folds into the Kazal-like domain. Intrachain disulfides connect cysteine 439/cysteine 469, cysteine 445/cysteine 465, and cysteine 454/cysteine 486. A helical transmembrane segment spans residues 514–536 (LILSAMSSFIYSLAAIPGYMVLL). Residues 537–545 (RCMKSEEKS) are Cytoplasmic-facing. A helical transmembrane segment spans residues 546 to 571 (LGVGLHTFCTRVFAGIPAPIYFGALM). At 572–605 (DSTCLHWGTLKCGESGACRIYDSTTFRYIYLGLP) the chain is on the extracellular side. Residues 606 to 623 (AALRGSSFVPALIILILL) form a helical membrane-spanning segment. Topologically, residues 624–670 (RKCHLPGENASSGTELIETKVKGKENECKDIYQKSTVLKDDELKTKL) are cytoplasmic.

The protein belongs to the organo anion transporter (TC 2.A.60) family. In terms of tissue distribution, higher expression in the brain than in liver and kidney. Expressed in brain neurons in both cortex and hippocampus. Expressed in placental trophoblasts. Also expressed in lung and testes at lower levels. Expressed in the eye (at protein level). Expressed in the retina in the outer and inner nuclear layers, the inner plexiform layer and the ganglion cell layer. Expressed in liver and prostate. In testis, primarily localized to the basal membrane of Sertoli cells and weakly expressed in Leydig cells and within the tubules. Expressed in fetal brain and liver.

It is found in the cell membrane. It localises to the basal cell membrane. It catalyses the reaction taurocholate(out) = taurocholate(in). The enzyme catalyses glycocholate(out) = glycocholate(in). The catalysed reaction is taurochenodeoxycholate(out) = taurochenodeoxycholate(in). It carries out the reaction tauroursodeoxycholate(out) = tauroursodeoxycholate(in). It catalyses the reaction dehydroepiandrosterone 3-sulfate(out) = dehydroepiandrosterone 3-sulfate(in). The enzyme catalyses estrone 3-sulfate(out) = estrone 3-sulfate(in). The catalysed reaction is 3,3',5'-triiodo-L-thyronine(out) = 3,3',5'-triiodo-L-thyronine(in). It carries out the reaction L-thyroxine(out) = L-thyroxine(in). It catalyses the reaction taurodeoxycholate(out) = taurodeoxycholate(in). The enzyme catalyses glycodeoxycholate(out) = glycodeoxycholate(in). The catalysed reaction is glycochenodeoxycholate(out) = glycochenodeoxycholate(in). It carries out the reaction glycoursodeoxycholate(out) = glycoursodeoxycholate(in). It catalyses the reaction 17beta-estradiol 17-O-(beta-D-glucuronate)(out) = 17beta-estradiol 17-O-(beta-D-glucuronate)(in). The enzyme catalyses prostaglandin E2(out) = prostaglandin E2(in). The catalysed reaction is substance P(out) = substance P(in). Its activity is regulated as follows. Transport activity is inhibited by the grapefruit juice component naringin. Its function is as follows. Na(+)-independent transporter that mediates the cellular uptake of a broad range of organic anions such as the endogenous bile salts cholate and deoxycholate, either in their unconjugated or conjugated forms (taurocholate and glycocholate), at the plasmam membrane. Responsible for intestinal absorption of bile acids. Transports dehydroepiandrosterone 3-sulfate (DHEAS), a major circulating steroid secreted by the adrenal cortex, as well as estrone 3-sulfate and 17beta-estradiol 17-O-(beta-D-glucuronate). Mediates apical uptake of all-trans-retinol (atROL) across human retinal pigment epithelium, which is essential to maintaining the integrity of the visual cycle and thus vision. Involved in the uptake of clinically used drugs. Capable of thyroid hormone transport (both T3 or 3,3',5'-triiodo-L-thyronine, and T4 or L-tyroxine). Also transports prostaglandin E2. Plays roles in blood-brain and -cerebrospinal fluid barrier transport of organic anions and signal mediators, and in hormone uptake by neural cells. May also play a role in the reuptake of neuropeptides such as substance P/TAC1 and vasoactive intestinal peptide/VIP released from retinal neurons. May play an important role in plasma and tissue distribution of the structurally diverse chemotherapeutic drugs methotrexate and paclitaxel. Shows a pH-sensitive substrate specificity which may be ascribed to the protonation state of the binding site and leads to a stimulation of substrate transport in an acidic microenvironment. Hydrogencarbonate/HCO3(-) acts as the probable counteranion that exchanges for organic anions. May contribute to regulate the transport of organic compounds in testis across the blood-testis-barrier. This Homo sapiens (Human) protein is Solute carrier organic anion transporter family member 1A2 (SLCO1A2).